The primary structure comprises 86 residues: Exodeoxyribonuclease 7 small subunit (86 aa).

The tract at residues 1 to 27 is disordered; the sequence is MQDELFETEKIPPKNTKNAKNAPKKSF.

The protein belongs to the XseB family. In terms of assembly, heterooligomer composed of large and small subunits.

It is found in the cytoplasm. The enzyme catalyses Exonucleolytic cleavage in either 5'- to 3'- or 3'- to 5'-direction to yield nucleoside 5'-phosphates.. Its function is as follows. Bidirectionally degrades single-stranded DNA into large acid-insoluble oligonucleotides, which are then degraded further into small acid-soluble oligonucleotides. In Helicobacter pylori (strain G27), this protein is Exodeoxyribonuclease 7 small subunit.